The chain runs to 941 residues: MWTEEAAATAEARESGIRNKSSSSSQIPVVGVVTEDNEAQGVFKPMDLNRVIKLLEETDKDGLEEKQLKFVKKLVQCFQNGLPLRDLAQIFKILNLCAGKIKNQPRFVESAYDIIKLCSLPFLKKKVSDEITYAEDTANSIALLGDLMKIPSSELRIQICKCIVDFYHAEPPKKHIPGYQQASSSYKIQMAEVGGLAKTMVQSITLLEHQLVEKLWVLKVLQHLSTSEVNCTIMMKAQAASGICTHLNDPDPSGQLLFRSSEILWNLLEKSSKEEVIQQLSNLECLLALKEVFTNLFMRGFSHYDRQLRNDILVITTIIAQNPEAPMIECGFTKDLILFATFNEVKSQNLLVKGLKLSNSYEDFELKKLLFNVIVILCKDLPTVQLLIDGKVILALFTYVKKPEKQKIMGWSAAQHEELQLHAIATLSSVAPLLIEEYMSCQGNARVLAFLEWCESEDPFFSHGNSFHGTGGRGNKFAQMRYSLRLLRAMVYLEDETVNTDLCEKGTIQQMIGIFKNIISKPNEKEEAIVLEIQSDILLILSGLCENHIQRKEIFGTEGVDIVLHVMKTDPRKLQSGLGYNLLLFSTLDSIWCCILGCYPSEDYFLEREGIFLLLDVLALNQKKFCNLILGIMVEFCDNPKTAAHVNAWQGKKDQTAASLLIKLWRKEEKELGVKRDKNGKIIDTKKPLFTSFQEEHKIIPLPANCPSIAVMDVSENIRAKIYAILGKLDFENLPGLSAEDFVTLCVIHRYLDFKIGEIWNEIYEEIKLEKLRPVTIDKKALEAITTASENVGKMVASLQSEIIESQARQDVQNEQKVYAKIQATHKQRELANKSWENFLARTSNAKTLKKAKRLQEKAIEASRYHKRPQNAVFHGTDIKGLNTTVPSGGVVTVESTPARLVGGPLADTDIALKKLPIRGGALQRVKAVEIVDAPKKSIPT.

Low complexity predominate over residues 1–10 (MWTEEAAATA). The disordered stretch occupies residues 1 to 23 (MWTEEAAATAEARESGIRNKSSS).

Its subcellular location is the cell projection. It is found in the cilium. The protein localises to the flagellum. Its function is as follows. Cilium- and flagellum-associated protein. In the olfactory epithelium, regulates the speed of activation and termination of the odor response and thus contributes to the robustness of olfactory transduction pathways. Required for sperm flagellum assembly and stability. This is Cilia- and flagella-associated protein 69 from Papio anubis (Olive baboon).